A 150-amino-acid chain; its full sequence is 3-dehydroquinate dehydratase (150 aa).

Y26 acts as the Proton acceptor in catalysis. Substrate-binding residues include N77, H83, and D90. H103 functions as the Proton donor in the catalytic mechanism. Substrate-binding positions include 104-105 (LS) and R114.

The protein belongs to the type-II 3-dehydroquinase family. In terms of assembly, homododecamer.

It carries out the reaction 3-dehydroquinate = 3-dehydroshikimate + H2O. Its pathway is metabolic intermediate biosynthesis; chorismate biosynthesis; chorismate from D-erythrose 4-phosphate and phosphoenolpyruvate: step 3/7. Its function is as follows. Catalyzes a trans-dehydration via an enolate intermediate. The chain is 3-dehydroquinate dehydratase from Citrobacter koseri (strain ATCC BAA-895 / CDC 4225-83 / SGSC4696).